A 1225-amino-acid chain; its full sequence is DNA-directed RNA polymerase subunit beta' (1225 aa).

4 residues coordinate Zn(2+): C60, C62, C75, and C78. Residues D450, D452, and D454 each contribute to the Mg(2+) site. Zn(2+) is bound by residues C818, C892, C899, and C902.

Belongs to the RNA polymerase beta' chain family. The RNAP catalytic core consists of 2 alpha, 1 beta, 1 beta' and 1 omega subunit. When a sigma factor is associated with the core the holoenzyme is formed, which can initiate transcription. Requires Mg(2+) as cofactor. Zn(2+) serves as cofactor.

The enzyme catalyses RNA(n) + a ribonucleoside 5'-triphosphate = RNA(n+1) + diphosphate. In terms of biological role, DNA-dependent RNA polymerase catalyzes the transcription of DNA into RNA using the four ribonucleoside triphosphates as substrates. In Streptococcus pneumoniae (strain Hungary19A-6), this protein is DNA-directed RNA polymerase subunit beta'.